The chain runs to 142 residues: Sec-independent protein translocase protein TatB (142 aa).

Residues 1–21 form a helical membrane-spanning segment; it reads MFDIGASELLVLVIVAIVVIG. Positions 75-142 are disordered; the sequence is RETAAQETAA…PAARPGSQQP (68 aa). The segment covering 76–94 has biased composition (low complexity); the sequence is ETAAQETAAAQGQTPAAAE. Residues 123-133 show a composition bias toward basic and acidic residues; that stretch reads AKVEARVEEAP.

It belongs to the TatB family. In terms of assembly, the Tat system comprises two distinct complexes: a TatABC complex, containing multiple copies of TatA, TatB and TatC subunits, and a separate TatA complex, containing only TatA subunits. Substrates initially bind to the TatABC complex, which probably triggers association of the separate TatA complex to form the active translocon.

It localises to the cell inner membrane. Part of the twin-arginine translocation (Tat) system that transports large folded proteins containing a characteristic twin-arginine motif in their signal peptide across membranes. Together with TatC, TatB is part of a receptor directly interacting with Tat signal peptides. TatB may form an oligomeric binding site that transiently accommodates folded Tat precursor proteins before their translocation. This is Sec-independent protein translocase protein TatB from Novosphingobium aromaticivorans (strain ATCC 700278 / DSM 12444 / CCUG 56034 / CIP 105152 / NBRC 16084 / F199).